The chain runs to 217 residues: Octanoyltransferase (217 aa).

Positions 30-209 (GNRPPTLLLL…AFAEVFGLRP (180 aa)) constitute a BPL/LPL catalytic domain. Substrate contacts are provided by residues 75–82 (RGGDVTYH), 139–141 (AIG), and 152–154 (GFA). The active-site Acyl-thioester intermediate is the Cys170.

It belongs to the LipB family.

Its subcellular location is the cytoplasm. It carries out the reaction octanoyl-[ACP] + L-lysyl-[protein] = N(6)-octanoyl-L-lysyl-[protein] + holo-[ACP] + H(+). The protein operates within protein modification; protein lipoylation via endogenous pathway; protein N(6)-(lipoyl)lysine from octanoyl-[acyl-carrier-protein]: step 1/2. Its function is as follows. Catalyzes the transfer of endogenously produced octanoic acid from octanoyl-acyl-carrier-protein onto the lipoyl domains of lipoate-dependent enzymes. Lipoyl-ACP can also act as a substrate although octanoyl-ACP is likely to be the physiological substrate. The sequence is that of Octanoyltransferase from Thermus thermophilus (strain ATCC 27634 / DSM 579 / HB8).